The following is a 272-amino-acid chain: uncharacterized protein (272 aa).

The signal sequence occupies residues 1–20 (MKLRKIFLLPLISLSTLSVA). Cys-21 carries the N-palmitoyl cysteine lipid modification. Cys-21 carries the S-diacylglycerol cysteine lipid modification.

The protein belongs to the MG439/MG440 family.

It is found in the cell membrane. This is an uncharacterized protein from Mycoplasma genitalium (strain ATCC 33530 / DSM 19775 / NCTC 10195 / G37) (Mycoplasmoides genitalium).